Here is a 291-residue protein sequence, read N- to C-terminus: MAGSLSEIKAKIISTEKTSKITSAMRMVSSAKLVKSEQAARDFQIYASKIRQITTDLLKSELTIGSDNPMLVSRPVKKTGYIVITSDKGLVGGYNSKILKSVMDMITEYHADGDYEIISIGSVGSDFFKARGMNVAFELRGLADQPSFEQVRQIISQSVDMFVNEIFDELYVCYNHHVNSLTSQVRVQQMLPISDLVADEAAEEGVTGFELEPNRQDILDQLLPQFTESLIYGAIIDAKTAEHAAGMTAMQTATDNAKNVINDLTIQYNRARQAAITQEITEIVAGANALE.

The protein belongs to the ATPase gamma chain family. As to quaternary structure, F-type ATPases have 2 components, CF(1) - the catalytic core - and CF(0) - the membrane proton channel. CF(1) has five subunits: alpha(3), beta(3), gamma(1), delta(1), epsilon(1). CF(0) has three main subunits: a, b and c.

It localises to the cell membrane. Functionally, produces ATP from ADP in the presence of a proton gradient across the membrane. The gamma chain is believed to be important in regulating ATPase activity and the flow of protons through the CF(0) complex. This Streptococcus pyogenes serotype M49 (strain NZ131) protein is ATP synthase gamma chain.